The chain runs to 122 residues: Large ribosomal subunit protein uL14 (122 aa).

Belongs to the universal ribosomal protein uL14 family. Part of the 50S ribosomal subunit. Forms a cluster with proteins L3 and L19. In the 70S ribosome, L14 and L19 interact and together make contacts with the 16S rRNA in bridges B5 and B8.

Its function is as follows. Binds to 23S rRNA. Forms part of two intersubunit bridges in the 70S ribosome. The sequence is that of Large ribosomal subunit protein uL14 from Picosynechococcus sp. (strain ATCC 27264 / PCC 7002 / PR-6) (Agmenellum quadruplicatum).